A 1207-amino-acid chain; its full sequence is RNA-binding protein 20 (1207 aa).

Residues 1–58 (MVLAAAMSQDADPSGPEQPDRDACIVPGVQGPPAPQGQQGMQPLPPPLPPPPQPQSSL) form a disordered region. A compositionally biased stretch (pro residues) spans 43 to 54 (PLPPPLPPPPQP). A U1-type zinc finger spans residues 412-446 (HLPHICSICDKKVFDLKDWELHVKGKLHAQKCLLF). The 76-residue stretch at 521–596 (RVVHICNLPE…EKLLIRMSTR (76 aa)) folds into the RRM domain. Positions 625–637 (LREADRYGPERPR) are enriched in basic and acidic residues. Disordered regions lie at residues 625-686 (LREA…NGED), 722-896 (EKYL…MEEL), and 951-1110 (QGET…AELK). An RS region spans residues 631-650 (YGPERPRSRSPMSRSLSPRS). Ser-638, Ser-640, Ser-643, Ser-645, and Ser-652 each carry phosphoserine. The span at 639 to 650 (RSPMSRSLSPRS) shows a compositional bias: low complexity. Residues 668 to 686 (YAWRDEDRETVPRRENGED) are compositionally biased toward basic and acidic residues. Ser-729 bears the Phosphoserine mark. 3 stretches are compositionally biased toward basic and acidic residues: residues 740–759 (KGRE…DKHP), 772–789 (RKEE…PEDS), and 796–836 (EPKV…RGAE). Ser-789 bears the Phosphoserine mark. Residues 839-848 (AGTEEQEGME) are compositionally biased toward acidic residues. 2 positions are modified to phosphoserine: Ser-853 and Ser-864. Positions 853–863 (SVGTQQEGTES) are enriched in polar residues. Over residues 867–876 (ENTRTKKGQD) the composition is skewed to basic and acidic residues. Residues Ser-879, Ser-881, and Ser-963 each carry the phosphoserine modification. The span at 970 to 979 (VPSTSTSCPN) shows a compositional bias: polar residues. Ser-999 is subject to Phosphoserine. Residues 1011 to 1022 (YEKEARGAEGSD) are compositionally biased toward basic and acidic residues. Residues Ser-1034, Ser-1046, Ser-1057, Ser-1066, Ser-1078, Ser-1096, and Ser-1101 each carry the phosphoserine modification. The segment covering 1050 to 1072 (DDCKARGSPEDGPHEVSPLEEKA) has biased composition (basic and acidic residues). Residues 1073–1102 (SPTTESDLQSQACQENSRYTETRSLNSRSP) are compositionally biased toward polar residues. The Matrin-type zinc finger occupies 1141 to 1172 (FYCKLCGLFYTSEEAAKVSHCRSTVHYRNLQK). Residues 1181–1207 (GLKETEGVDSPSPERSGIGPHLERKKL) form a disordered region. Phosphoserine occurs at positions 1190 and 1192.

As to quaternary structure, associates with components of the U1 and U2 U1 small nuclear ribonucleoprotein complexes. Post-translationally, phosphorylation regulates the subcellular localization. Phosphorylation of Ser-638 and Ser-640 in the RS (arginine/serine-rich) region promotes nuclear localization of the protein. In contrast, phosphorylation of the C-terminal disordered region promotes localization to cytoplasmic ribonucleoprotein granules.

It localises to the nucleus. It is found in the cytoplasm. The protein resides in the cytoplasmic ribonucleoprotein granule. In terms of biological role, RNA-binding protein that acts as a regulator of mRNA splicing of a subset of genes encoding key structural proteins involved in cardiac development, such as TTN (Titin), CACNA1C, CAMK2D or PDLIM5/ENH. Acts as a repressor of mRNA splicing: specifically binds the 5'UCUU-3' motif that is predominantly found within intronic sequences of pre-mRNAs, leading to the exclusion of specific exons in target transcripts. RBM20-mediated exon skipping is hormone-dependent and is essential for TTN isoform transition in both cardiac and skeletal muscles. RBM20-mediated exon skipping of TTN provides substrates for the formation of circular RNA (circRNAs) from the TTN transcripts. Together with RBM24, promotes the expression of short isoforms of PDLIM5/ENH in cardiomyocytes. This chain is RNA-binding protein 20, found in Rattus norvegicus (Rat).